Consider the following 352-residue polypeptide: Pejvakin (352 aa).

Belongs to the gasdermin family. In terms of assembly, interacts with MAP1LC3B; interaction is direct. Interacts with IQGAP1. Interacts with ROCK2. Interacts with TRIOBP.

It localises to the peroxisome membrane. The protein resides in the cell projection. It is found in the cilium. Its function is as follows. Peroxisome-associated protein required to protect auditory hair cells against noise-induced damage. Acts by regulating noise-induced peroxisome proliferation in auditory hair cells and neurons, and promoting autophagic degradation of damaged peroxisomes (pexophagy). Noise overexposure increases reactive oxygen species (ROS) levels, causing oxidative damage to auditory hair cells and resulting in hearing loss. PJVK acts as a ROS sensor that recruits the autophagy machinery to trigger pexophagy of peroxisomes damaged by oxidative stress. In addition to pexophagy, also required to promote peroxisome proliferation in response to sound overstimulation. The chain is Pejvakin from Homo sapiens (Human).